The primary structure comprises 626 residues: Carnitine O-acetyltransferase (626 aa).

N6-succinyllysine is present on lysine 93. At lysine 261 the chain carries N6-acetyllysine; alternate. At lysine 261 the chain carries N6-succinyllysine; alternate. Lysine 268 bears the N6-acetyllysine mark. Histidine 343 functions as the Proton acceptor in the catalytic mechanism. Residues lysine 419 and 423–430 (KSQKLSPD) each bind CoA. 2 residues coordinate (R)-carnitine: tyrosine 452 and serine 454. Residue serine 456 coordinates CoA. Threonine 465 contacts (R)-carnitine. Residues arginine 504 and glutamine 555 each coordinate CoA. A Microbody targeting signal motif is present at residues 624–626 (AKL).

The protein belongs to the carnitine/choline acetyltransferase family. In terms of assembly, monomer. Expressed in flagella of epididymal sperm.

It is found in the endoplasmic reticulum. The protein localises to the peroxisome. The protein resides in the mitochondrion inner membrane. It catalyses the reaction (R)-carnitine + acetyl-CoA = O-acetyl-(R)-carnitine + CoA. The enzyme catalyses propanoyl-CoA + (R)-carnitine = O-propanoyl-(R)-carnitine + CoA. It carries out the reaction butanoyl-CoA + (R)-carnitine = O-butanoyl-(R)-carnitine + CoA. The catalysed reaction is hexanoyl-CoA + (R)-carnitine = O-hexanoyl-(R)-carnitine + CoA. It catalyses the reaction octanoyl-CoA + (R)-carnitine = O-octanoyl-(R)-carnitine + CoA. The enzyme catalyses decanoyl-CoA + (R)-carnitine = O-decanoyl-(R)-carnitine + CoA. It carries out the reaction 3-methylbutanoyl-CoA + (R)-carnitine = O-3-methylbutanoyl-(R)-carnitine + CoA. The catalysed reaction is 2-methylpropanoyl-CoA + (R)-carnitine = O-isobutanoyl-(R)-carnitine + CoA. It catalyses the reaction 2-methylbutanoyl-CoA + (R)-carnitine = O-2-methylbutanoyl-(R)-carnitine + CoA. The enzyme catalyses acetoacetyl-CoA + (R)-carnitine = O-3-oxobutanoyl-(R)-carnitine + CoA. It carries out the reaction 3-hydroxybutanoyl-CoA + (R)-carnitine = O-3-hydroxybutanoyl-(R)-carnitine + CoA. The catalysed reaction is 4,8-dimethylnonanoyl-CoA + (R)-carnitine = O-4,8-dimethylnonanoyl-(R)-carnitine + CoA. It catalyses the reaction 2,6-dimethylheptanoyl-CoA + (R)-carnitine = O-2,6-dimethylheptanoyl-(R)-carnitine + CoA. In terms of biological role, catalyzes the reversible transfer of acyl groups from carnitine to coenzyme A (CoA) and regulates the acyl-CoA/CoA ratio. Also plays a crucial role in the transport of fatty acids for beta-oxidation. Responsible for the synthesis of short- and branched-chain acylcarnitines. Active towards some branched-chain amino acid oxidation pathway (BCAAO) intermediates. Trans-2-enoyl-CoAs and 2-methylacyl-CoAs are poor substrates. This Rattus norvegicus (Rat) protein is Carnitine O-acetyltransferase.